Consider the following 129-residue polypeptide: Protein Turandot B1 (129 aa).

Positions Met1–Gly21 are cleaved as a signal peptide.

Belongs to the Turandot family.

It localises to the secreted. In terms of biological role, a humoral factor that may play a role in stress tolerance. The protein is Protein Turandot B1 (TotB1) of Drosophila erecta (Fruit fly).